The chain runs to 97 residues: Serine protease inhibitor Kazal-type 8 (97 aa).

Positions 1-21 (MKGICSDAILVLATSMWMAFA) are cleaved as a signal peptide. One can recognise a Kazal-like domain in the interval 36-96 (DKTIVECLKN…TKLYDGQCEN (61 aa)). Disulfide bonds link cysteine 42–cysteine 76, cysteine 49–cysteine 73, and cysteine 62–cysteine 94. Asparagine 85 carries an N-linked (GlcNAc...) asparagine glycan.

Its subcellular location is the secreted. Its function is as follows. Probable serine protease inhibitor. In Homo sapiens (Human), this protein is Serine protease inhibitor Kazal-type 8 (SPINK8).